Here is a 474-residue protein sequence, read N- to C-terminus: MNNFGEDFIFGGATAAYQAEGATKEDGKGPCIWDEYLKKEGRFTGDTASDFYHKYKEDLKFSRKFGVNGIRISIAWSRVIPDGKGEVNPKGLKFYSDLIDECIKNNVEPFVTLHHFDTPLTLFKDGDWLNRNNIDYFVRFAKVCFEALGDRVKKWITFNEAWAVAQNGYIIGNFPPSIKYDIPKAAQSMHNMMVAHAKVVELYKSMNLDGEIGIVHTLEGKYPITDSKEDKEAAYLDYMISNKFMLDACFKGEYPKETEKTINEIMSKNGGELKIYDGDLEVLKKASSKIDFLGMNYYSSHFLKAYEGESRIHHNGTGEKGTSIFALKGIGERVNNPEVPTTDWDWPIYPKGLHDMLVRIKNEYPNYKKIYVTENGMGYKDDFKDGKIDDTPRIDYINKHLEAILKAKNEGVVVKGYFVWSLMDVLSWSNGYNKRYGLFYVDFKTQNRYAKKSAYWFKRISYEKKLIDFSDIEY.

The D-galactose 6-phosphate site is built by glutamine 18, histidine 115, asparagine 159, glutamate 160, and asparagine 296. Glutamate 160 acts as the Proton donor in catalysis. Glutamate 374 functions as the Nucleophile in the catalytic mechanism. 4 residues coordinate D-galactose 6-phosphate: serine 427, tryptophan 428, lysine 434, and tyrosine 436.

The protein belongs to the glycosyl hydrolase 1 family.

It carries out the reaction a 6-phospho-beta-D-galactoside + H2O = D-galactose 6-phosphate + an alcohol. The protein operates within carbohydrate metabolism; lactose degradation; D-galactose 6-phosphate and beta-D-glucose from lactose 6-phosphate: step 1/1. The polypeptide is 6-phospho-beta-galactosidase (Clostridium acetobutylicum (strain ATCC 824 / DSM 792 / JCM 1419 / IAM 19013 / LMG 5710 / NBRC 13948 / NRRL B-527 / VKM B-1787 / 2291 / W)).